Reading from the N-terminus, the 356-residue chain is tRNA-specific 2-thiouridylase MnmA (356 aa).

ATP contacts are provided by residues 6–13 (GMSGGVDS) and Leu32. Cys102 (nucleophile) is an active-site residue. A disulfide bridge connects residues Cys102 and Cys200. Gly127 provides a ligand contact to ATP. The interaction with tRNA stretch occupies residues 150 to 152 (RDQ). Cys200 (cysteine persulfide intermediate) is an active-site residue. The tract at residues 302 to 303 (RY) is interaction with tRNA.

The protein belongs to the MnmA/TRMU family.

It is found in the cytoplasm. The enzyme catalyses S-sulfanyl-L-cysteinyl-[protein] + uridine(34) in tRNA + AH2 + ATP = 2-thiouridine(34) in tRNA + L-cysteinyl-[protein] + A + AMP + diphosphate + H(+). Functionally, catalyzes the 2-thiolation of uridine at the wobble position (U34) of tRNA, leading to the formation of s(2)U34. The protein is tRNA-specific 2-thiouridylase MnmA of Aquifex aeolicus (strain VF5).